A 145-amino-acid polypeptide reads, in one-letter code: LIRP (145 aa).

The or 22 signal peptide spans 1–19 (MWKLCLRLLAVLAVCLSTA). 2 consecutive propeptides follow at residues 20–33 (TQAQ…SPKR) and 117–122 (FRRRTR). Cystine bridges form between Cys-44-Cys-129, Cys-56-Cys-142, and Cys-128-Cys-133.

This sequence belongs to the insulin family. Heterodimer of a B chain and an A chain linked by two disulfide bonds.

The protein resides in the secreted. This Locusta migratoria (Migratory locust) protein is LIRP.